We begin with the raw amino-acid sequence, 200 residues long: ADP-ribosylation factor-like protein 4A (200 aa).

Residue G2 is the site of N-myristoyl glycine attachment. GTP-binding positions include 27 to 34 (GLDCAGKT), 75 to 79 (DVGGQ), and 134 to 137 (NKQD).

The protein belongs to the small GTPase superfamily. Arf family. In terms of assembly, interacts with CYTH2. Interacts with KPNA2; the interaction is direct. Does not interact with ARL4A. Myristoylated. In terms of tissue distribution, expressed strongly in testis and liver. Expressed slightly in heart, spleen, lung and kidney.

It is found in the cell membrane. The protein resides in the cytoplasm. It localises to the nucleus. Its subcellular location is the nucleolus. In terms of biological role, small GTP-binding protein which cycles between an inactive GDP-bound and an active GTP-bound form, and the rate of cycling is regulated by guanine nucleotide exchange factors (GEF) and GTPase-activating proteins (GAP). GTP-binding protein that does not act as an allosteric activator of the cholera toxin catalytic subunit. Recruits CYTH1, CYTH2, CYTH3 and CYTH4 to the plasma membrane in GDP-bound form. This Mus musculus (Mouse) protein is ADP-ribosylation factor-like protein 4A (Arl4a).